The following is a 111-amino-acid chain: Large ribosomal subunit protein uL24 (111 aa).

The protein belongs to the universal ribosomal protein uL24 family. In terms of assembly, part of the 50S ribosomal subunit.

Functionally, one of two assembly initiator proteins, it binds directly to the 5'-end of the 23S rRNA, where it nucleates assembly of the 50S subunit. Its function is as follows. One of the proteins that surrounds the polypeptide exit tunnel on the outside of the subunit. This Myxococcus xanthus (strain DK1622) protein is Large ribosomal subunit protein uL24.